A 437-amino-acid chain; its full sequence is ATP-dependent protease ATPase subunit HslU (437 aa).

Residues Val18, 60-65 (GCGKTE), Asp250, Glu315, and Arg387 contribute to the ATP site.

It belongs to the ClpX chaperone family. HslU subfamily. A double ring-shaped homohexamer of HslV is capped on each side by a ring-shaped HslU homohexamer. The assembly of the HslU/HslV complex is dependent on binding of ATP.

Its subcellular location is the cytoplasm. In terms of biological role, ATPase subunit of a proteasome-like degradation complex; this subunit has chaperone activity. The binding of ATP and its subsequent hydrolysis by HslU are essential for unfolding of protein substrates subsequently hydrolyzed by HslV. HslU recognizes the N-terminal part of its protein substrates and unfolds these before they are guided to HslV for hydrolysis. This Methylobacterium nodulans (strain LMG 21967 / CNCM I-2342 / ORS 2060) protein is ATP-dependent protease ATPase subunit HslU.